A 217-amino-acid polypeptide reads, in one-letter code: MIQSLLTQFGEPLTRVENAITALQQGQGVLVVDDENRENEGDFVFSAEHLTTAQMAEMIREGSGIVCLCMGEERIKQLDLPQMVTHNTSQNNTAYTITIEAKEGVTTGVSAADRVTTIKAATADNAKPEDLSRPGHVFGLKAKTGGVLVRRGHTEASVDLMQLAGLKPFGVICELTNPDGSMARLPEVSGYANKHNMPVVSIEDLVQYIQIAQQKVS.

D-ribulose 5-phosphate contacts are provided by residues 37 to 38 (RE), aspartate 42, 150 to 154 (RRGHT), and glutamate 174. A Mg(2+)-binding site is contributed by glutamate 38. Histidine 153 is a binding site for Mg(2+).

The protein belongs to the DHBP synthase family. As to quaternary structure, homodimer. It depends on Mg(2+) as a cofactor. Requires Mn(2+) as cofactor.

It catalyses the reaction D-ribulose 5-phosphate = (2S)-2-hydroxy-3-oxobutyl phosphate + formate + H(+). Its pathway is cofactor biosynthesis; riboflavin biosynthesis; 2-hydroxy-3-oxobutyl phosphate from D-ribulose 5-phosphate: step 1/1. Functionally, catalyzes the conversion of D-ribulose 5-phosphate to formate and 3,4-dihydroxy-2-butanone 4-phosphate. In Pseudoalteromonas translucida (strain TAC 125), this protein is 3,4-dihydroxy-2-butanone 4-phosphate synthase.